The following is a 543-amino-acid chain: EH domain-containing protein 2 (543 aa).

A phosphoserine mark is found at serine 3 and serine 44. Residues 55–286 (FDGKPMVLVA…DLFRDIQGLP (232 aa)) enclose the Dynamin-type G domain. A G1 motif region spans residues 65–72 (GQYSTGKT). 65–72 (GQYSTGKT) provides a ligand contact to ATP. The segment at 91 to 92 (EP) is G2 motif. Residues 153 to 156 (DTPG) form a G3 motif region. A G4 motif region spans residues 219–222 (NKAD). Lysine 220 serves as a coordination point for ATP. Valine 243 is a region of interest (G5 motif). Position 258 (tryptophan 258) interacts with ATP. Residues 320–340 (SVFGKENKKKQLIFKLPVIFA) form a mediates membrane-binding region. Phosphoserine is present on residues serine 438, serine 468, serine 470, serine 484, and serine 493. One can recognise an EH domain in the interval 449 to 537 (DKSKYDEIFY…RRLVPPSKRR (89 aa)). The EF-hand domain maps to 481-516 (LPNSVLGRIWKLSDVDRDGMLDDEEFALASHLIEAK). Aspartate 494, aspartate 496, aspartate 498, methionine 500, and glutamate 505 together coordinate Ca(2+). Residues 521–543 (GLPTNLPRRLVPPSKRRQKGSAE) form a disordered region. The span at 534–543 (SKRRQKGSAE) shows a compositional bias: basic residues.

The protein belongs to the TRAFAC class dynamin-like GTPase superfamily. Dynamin/Fzo/YdjA family. EHD subfamily. As to quaternary structure, homodimer and homooligomer. Interacts with EHD1. May also interact with EHD3 and EHD4. Interacts with MYOF. Interacts with EHBP1. Interacts with FER1L5 (via second C2 domain). Interacts with CAV1 in a cholesterol-dependent manner. Interacts (via EH domain) with PACSIN2 (via NPF motifs); this interaction probably stabilizes the caveolae.

The protein localises to the cell membrane. Its subcellular location is the membrane. It localises to the caveola. The protein resides in the endosome membrane. It is found in the cytoplasm. The protein localises to the cytosol. The very low intrinsic ATPase activity is increased upon interaction with liposomes. ATP- and membrane-binding protein that controls membrane reorganization/tubulation upon ATP hydrolysis. Plays a role in membrane trafficking between the plasma membrane and endosomes. Important for the internalization of GLUT4. Required for fusion of myoblasts to skeletal muscle myotubes. Required for normal translocation of FER1L5 to the plasma membrane. Regulates the equilibrium between cell surface-associated and cell surface-dissociated caveolae by constraining caveolae at the cell membrane. The polypeptide is EH domain-containing protein 2 (Rattus norvegicus (Rat)).